We begin with the raw amino-acid sequence, 60 residues long: uncharacterized protein (60 aa).

Residues 33 to 55 (FRLLRGIFLITLVIWTVVWLKLL) form a helical membrane-spanning segment.

This sequence belongs to the HHV-5 UL2 protein family.

Its subcellular location is the host membrane. This is an uncharacterized protein from Human cytomegalovirus (strain AD169) (HHV-5).